Consider the following 522-residue polypeptide: Phosphatidylinositol 3,4,5-trisphosphate 3-phosphatase TPTE2 (522 aa).

Polar residues predominate over residues M1 to K11. A disordered region spans residues M1–F28. Residues G12–E27 are compositionally biased toward basic and acidic residues. 3 helical membrane passes run I66–L86, I111–G131, and A146–L166. In terms of domain architecture, Phosphatase tensin-type spans R210–Y386. The Phosphocysteine intermediate role is filled by C320. Residues R393–K522 form the C2 tensin-type domain.

As to expression, isoform 3 is expressed in testis, brain and stomach while isoform 4 seems to be testis-specific.

It is found in the endoplasmic reticulum membrane. It localises to the golgi apparatus membrane. The protein resides in the cytoplasm. It carries out the reaction a 1,2-diacyl-sn-glycero-3-phospho-(1D-myo-inositol-3,4,5-trisphosphate) + H2O = a 1,2-diacyl-sn-glycero-3-phospho-(1D-myo-inositol-4,5-bisphosphate) + phosphate. Acts as a lipid phosphatase, removing the phosphate in the D3 position of the inositol ring from phosphatidylinositol 3,4,5-trisphosphate. In terms of biological role, shows no phosphoinositide phosphatase activity. The protein is Phosphatidylinositol 3,4,5-trisphosphate 3-phosphatase TPTE2 (TPTE2) of Homo sapiens (Human).